The primary structure comprises 520 residues: Trichothecene O-acetyltransferase TRI3 (520 aa).

Residues 1 to 23 (MGSKLPELPKLSPEKHRWEKSNV) form a disordered region. Residues 12–23 (SPEKHRWEKSNV) show a composition bias toward basic and acidic residues.

It belongs to the trichothecene O-acetyltransferase family.

It functions in the pathway sesquiterpene biosynthesis; trichothecene biosynthesis. In terms of biological role, trichothecene O-acetyltransferase; part of the gene cluster that mediates the production of the antimicrobial trichothecene harzianum A (HA) that plays a role in Botrytis cinerea antagonistic activity and plant defense priming. The biosynthesis of harzianum A begins with the cyclization of farnesyl diphosphate to trichodiene and is catalyzed by the trichodiene synthase TRI5. Trichodiene undergoes a series of oxygenations catalyzed by the cytochrome P450 monooxygenase TRI4. TRI4 controls the addition of 3 oxygens at C-2, C-11, and the C-12, C-13-epoxide to form the intermediate isotrichodiol. Isotrichodiol then undergoes a non-enzymatic isomerization and cyclization to form 12,13-epoxytrichothec-9-ene (EPT) which is further converted to trichodermol by the cytochrome P450 monooxygenase TRI11 via C-4 hydroxylation. The last step of HA synthesis is esterification of an octatriendioyl moiety to the C-4 oxygen of trichodermol. The octatriendioyl moiety is probably produced by the polyketide synthase TRI17 and the esterification performed by the trichothecene O-acetyltransferase TRI3. The protein is Trichothecene O-acetyltransferase TRI3 of Trichoderma arundinaceum.